A 634-amino-acid polypeptide reads, in one-letter code: Sodium-dependent neutral amino acid transporter B(0)AT1 (634 aa).

At Met-1 to Tyr-41 the chain is on the cytoplasmic side. Ser-17 carries the post-translational modification Phosphoserine. A helical membrane pass occupies residues Met-42–Cys-62. The Extracellular portion of the chain corresponds to Gln-63–Gly-67. A helical transmembrane segment spans residues Gly-68–Leu-88. Residues Glu-89–Met-119 are Cytoplasmic-facing. A helical membrane pass occupies residues Phe-120–Phe-140. The Extracellular portion of the chain corresponds to Phe-141–Ser-192. Residues Asn-158 and Asn-182 are each glycosylated (N-linked (GlcNAc...) asparagine). The helical transmembrane segment at Ile-193–Ile-213 threads the bilayer. The Cytoplasmic segment spans residues Arg-214–Lys-221. Residues Ala-222–Leu-242 form a helical membrane-spanning segment. Topologically, residues Thr-243–Trp-268 are extracellular. Asn-258 carries an N-linked (GlcNAc...) asparagine glycan. The helical transmembrane segment at Leu-269–Phe-289 threads the bilayer. The Cytoplasmic portion of the chain corresponds to Ser-290 to Val-304. Residues Ile-305 to Ile-325 form a helical membrane-spanning segment. Residues Gly-326–Ser-413 are Extracellular-facing. N-linked (GlcNAc...) asparagine glycosylation is found at Asn-354 and Asn-368. A helical membrane pass occupies residues Pro-414–Gly-434. Residues Asn-435 to Glu-456 lie on the Cytoplasmic side of the membrane. A helical transmembrane segment spans residues Leu-457–Ser-477. The Extracellular portion of the chain corresponds to Gly-478–Ser-487. The chain crosses the membrane as a helical span at residues Phe-488 to Val-508. The Cytoplasmic segment spans residues Tyr-509–Gln-531. The chain crosses the membrane as a helical span at residues Val-532–Ile-552. The Extracellular portion of the chain corresponds to Glu-553–Trp-581. An N-linked (GlcNAc...) asparagine glycan is attached at Asn-555. Residues Val-582–Ile-602 traverse the membrane as a helical segment. At Tyr-603 to Asn-634 the chain is on the cytoplasmic side. Ser-627 carries the post-translational modification Phosphoserine.

Belongs to the sodium:neurotransmitter symporter (SNF) (TC 2.A.22) family. SLC6A19 subfamily. Interacts in a tissue-specific manner with ACE2 in small intestine and with CLTRN in the kidney. Interacts with CLTRN; this interaction is required for trafficking of SLC6A19 to the plasma membrane and for its catalytic activation in kidneys. Interacts with ACE2; this interaction is required for trafficking of SLC6A19 to the plasma membrane and for its catalytic activation in intestine. Interacts with ANPEP; the interaction positively regulates its amino acid transporter activity. As to expression, predominantly expressed in kidney and small intestine (at protein level). Expressed in the intestinal brush border (at protein level). Expression not observed in other organs, such as lung, skeletal muscle, brain, liver and pancreas. In kidney, expression is localized in the renal cortex but not in the medulla. Substantial amounts of expression in the proximal tubules. The distal nephron segments and the glomeruli are consistently negative. In the small intestine, expression is exclusively localized in villus enterocytes. High resolution of the hybridization-positive villi reveals a gradient of expression with the highest levels in apical cells. Not detected in crypt cells or in any other cell types of the small intestine.

The protein localises to the cell membrane. The enzyme catalyses L-alanine(in) + Na(+)(in) = L-alanine(out) + Na(+)(out). It carries out the reaction L-cysteine(in) + Na(+)(in) = L-cysteine(out) + Na(+)(out). The catalysed reaction is L-glutamine(in) + Na(+)(in) = L-glutamine(out) + Na(+)(out). It catalyses the reaction glycine(in) + Na(+)(in) = glycine(out) + Na(+)(out). The enzyme catalyses L-isoleucine(in) + Na(+)(in) = L-isoleucine(out) + Na(+)(out). It carries out the reaction L-leucine(in) + Na(+)(in) = L-leucine(out) + Na(+)(out). The catalysed reaction is L-methionine(in) + Na(+)(in) = L-methionine(out) + Na(+)(out). It catalyses the reaction L-phenylalanine(in) + Na(+)(in) = L-phenylalanine(out) + Na(+)(out). The enzyme catalyses L-serine(in) + Na(+)(in) = L-serine(out) + Na(+)(out). It carries out the reaction L-tryptophan(in) + Na(+)(in) = L-tryptophan(out) + Na(+)(out). The catalysed reaction is L-tyrosine(in) + Na(+)(in) = L-tyrosine(out) + Na(+)(out). It catalyses the reaction L-valine(in) + Na(+)(in) = L-valine(out) + Na(+)(out). Its function is as follows. Transporter that mediates resorption of neutral amino acids across the apical membrane of renal and intestinal epithelial cells. This uptake is sodium-dependent and chloride-independent. Requires CLTRN in kidney or ACE2 in intestine for cell surface expression and amino acid transporter activity. The polypeptide is Sodium-dependent neutral amino acid transporter B(0)AT1 (Slc6a19) (Mus musculus (Mouse)).